We begin with the raw amino-acid sequence, 176 residues long: Urease accessory protein UreE (176 aa).

This sequence belongs to the UreE family.

Its subcellular location is the cytoplasm. In terms of biological role, involved in urease metallocenter assembly. Binds nickel. Probably functions as a nickel donor during metallocenter assembly. The polypeptide is Urease accessory protein UreE (Helicobacter bizzozeronii).